A 60-amino-acid chain; its full sequence is Cytotoxin 8 (60 aa).

Disulfide bonds link Cys3/Cys21, Cys14/Cys38, Cys42/Cys53, and Cys54/Cys59.

It belongs to the three-finger toxin family. Short-chain subfamily. Type IA cytotoxin sub-subfamily. Monomer in solution; Homodimer and oligomer in the presence of negatively charged lipids forming a pore with a size ranging between 20 and 30 Angstroms. As to expression, expressed by the venom gland.

It is found in the secreted. It localises to the target cell membrane. Functionally, shows cytolytic activity on many different cells by forming pore in lipid membranes. In vivo, increases heart rate or kills the animal by cardiac arrest. In addition, it binds to heparin with high affinity, interacts with Kv channel-interacting protein 1 (KCNIP1) in a calcium-independent manner, and binds to integrin alpha-V/beta-3 (ITGAV/ITGB3) with moderate affinity. Has hemolytic activity towards human erythrocytes (EC(50)=0.074 uM) and cytolytic activity towards various cell lines. The polypeptide is Cytotoxin 8 (Naja naja (Indian cobra)).